The sequence spans 259 residues: Type III pantothenate kinase (259 aa).

ATP is bound at residue 6 to 13 (DVGNTNIV). Residues Tyr-100 and 107 to 110 (GADR) contribute to the substrate site. Asp-109 serves as the catalytic Proton acceptor. Asp-129 contacts K(+). Thr-132 serves as a coordination point for ATP. Substrate is bound at residue Thr-184.

Belongs to the type III pantothenate kinase family. In terms of assembly, homodimer. The cofactor is NH4(+). Requires K(+) as cofactor.

It localises to the cytoplasm. It carries out the reaction (R)-pantothenate + ATP = (R)-4'-phosphopantothenate + ADP + H(+). It functions in the pathway cofactor biosynthesis; coenzyme A biosynthesis; CoA from (R)-pantothenate: step 1/5. In terms of biological role, catalyzes the phosphorylation of pantothenate (Pan), the first step in CoA biosynthesis. The sequence is that of Type III pantothenate kinase from Clostridium perfringens (strain ATCC 13124 / DSM 756 / JCM 1290 / NCIMB 6125 / NCTC 8237 / Type A).